A 147-amino-acid chain; its full sequence is CRISP-1 (147 aa).

The protein belongs to the CRISP family. As to expression, expressed by the venom gland.

Its subcellular location is the secreted. In Phoneutria keyserlingi (Brazilian wandering spider), this protein is CRISP-1.